The primary structure comprises 518 residues: MAVALGCAIQASLNQGSVFQEYDTDCEVFRQRFRQFQYREAAGPHEAFNKLWELCCQWLKPKMRSKEQILELLVLEQFLTILPTEIETWVREHCPENRERVVSLIEDLQRELEIPEQQVDMHDMLLEELAPVGTAHIPPTMHLESPALQVMGPAQEAPVAEAWIPQAGPPELNYGATGECQNFLDPGYPLPKLDMNFSLENREEPWVKELQDSKEMKQLLDSKIGFEIGIENEEDTSKQKKMETMYPFIVTLEGNALQGPILQKDYVQLENQWETPPEDLQTDLAKLVDQQNPTLGETPENSNLEEPLNPKPHKKKSPGEKPHRCPQCGKCFARKSQLTGHQRIHSGEEPHKCPECGKRFLRSSDLYRHQRLHTGERPYECTVCKKRFTRRSHLIGHQRTHSEEETYKCLECGKSFCHGSSLKRHLKTHTGEKPHRCHNCGKSFSRLTALTLHQRTHTEERPFKCNYCGKSFRQRPSLVIHLRIHTGEKPYKCTHCSKSFRQRAGLIMHQVTHFRGLI.

Positions 30–112 (RQRFRQFQYR…SLIEDLQREL (83 aa)) constitute an SCAN box domain. The span at 292 to 304 (NPTLGETPENSNL) shows a compositional bias: polar residues. A disordered region spans residues 292-325 (NPTLGETPENSNLEEPLNPKPHKKKSPGEKPHRC). 7 C2H2-type zinc fingers span residues 323-345 (HRCP…QRIH), 351-373 (HKCP…QRLH), 379-401 (YECT…QRTH), 407-429 (YKCL…LKTH), 435-457 (HRCH…QRTH), 463-485 (FKCN…LRIH), and 491-513 (YKCT…QVTH).

This sequence belongs to the krueppel C2H2-type zinc-finger protein family.

It localises to the nucleus. Its function is as follows. May be involved in transcriptional regulation. This Homo sapiens (Human) protein is Zinc finger protein 449 (ZNF449).